The sequence spans 276 residues: Large ribosomal subunit protein uL2 (276 aa).

The segment at 224–276 is disordered; it reads AMNPIDHPHGGGEGKTSGGRNPVTPWGVPTKGKKTRKRNKSSNKYIKRVSDKG. Positions 254–270 are enriched in basic residues; sequence KGKKTRKRNKSSNKYIK.

Belongs to the universal ribosomal protein uL2 family. In terms of assembly, part of the 50S ribosomal subunit. Forms a bridge to the 30S subunit in the 70S ribosome.

One of the primary rRNA binding proteins. Required for association of the 30S and 50S subunits to form the 70S ribosome, for tRNA binding and peptide bond formation. It has been suggested to have peptidyltransferase activity; this is somewhat controversial. Makes several contacts with the 16S rRNA in the 70S ribosome. In Ehrlichia chaffeensis (strain ATCC CRL-10679 / Arkansas), this protein is Large ribosomal subunit protein uL2.